We begin with the raw amino-acid sequence, 256 residues long: MSDSKEPRAQPLGLLEEEELITSSMNFFPRDFGFRQTRGYKSLAGCLGHAPLVLPLLFFTLFTGLLVAILVQVSKNPSSQRLDQSKQDEISQDLSQLKAAVERLCRPCPWEWTFFQGNCYFISNSQRNWHDSITACQEVGAQLVVIKSAEEQNFLQLQSSRSNRFAWMGLSDLNQEDMWQWVDDSPLSTSFKQYWNRGEPNNIGEEDCVEFNGNGWNDDKCSAAKFWICKKSAASCSRDEGQLLSSASASPIAHAA.

Residues 1–50 are Cytoplasmic-facing; sequence MSDSKEPRAQPLGLLEEEELITSSMNFFPRDFGFRQTRGYKSLAGCLGHA. The short motif at 14 to 15 is the Endocytosis signal element; sequence LL. Residues 51–71 traverse the membrane as a helical; Signal-anchor for type II membrane protein segment; that stretch reads PLVLPLLFFTLFTGLLVAILV. The Extracellular segment spans residues 72–240; it reads QVSKNPSSQR…KSAASCSRDE (169 aa). Cystine bridges form between Cys-108/Cys-119, Cys-136/Cys-229, and Cys-208/Cys-221. In terms of domain architecture, C-type lectin spans 114–230; the sequence is FFQGNCYFIS…CSAAKFWICK (117 aa). 6 residues coordinate Ca(2+): Glu-199, Asn-201, Ile-203, Glu-206, Asn-217, and Asp-218.

Predominantly expressed in liver and axillary lymph nodes. At very low levels also found in other tissues.

It localises to the membrane. In terms of biological role, probable pathogen-recognition receptor involved in peripheral immune surveillance in liver. May mediate the endocytosis of pathogens which are subsequently degraded in lysosomal compartments. Probably recognizes in a calcium-dependent manner high mannose N-linked oligosaccharides in a variety of pathogen antigens. Is a receptor for ICAM3, probably by binding to mannose-like carbohydrates. This chain is CD209 antigen-like protein 2 (CD209L2), found in Macaca mulatta (Rhesus macaque).